A 446-amino-acid chain; its full sequence is ATP synthase subunit b-delta (446 aa).

The interval 1-168 (MSTFIGQLFG…PATADVDYPL (168 aa)) is ATP synthase subunit b. A helical membrane pass occupies residues 4–24 (FIGQLFGFAVIVYLVWRFIVP). Residues 169-446 (LAKMRSASRR…LAAAEARLPD (278 aa)) form an ATP synthase subunit delta region.

The protein in the N-terminal section; belongs to the ATPase B chain family. This sequence in the C-terminal section; belongs to the ATPase delta chain family. In terms of assembly, F-type ATPases have 2 components, F(1) - the catalytic core - and F(0) - the membrane proton channel. F(1) has five subunits: alpha(3), beta(3), gamma(1), delta(1), epsilon(1). F(0) has three main subunits: a(1), b(2) and c(10-14). The alpha and beta chains form an alternating ring which encloses part of the gamma chain. F(1) is attached to F(0) by a central stalk formed by the gamma and epsilon chains, while a peripheral stalk is formed by the delta and b chains.

It is found in the cell membrane. F(1)F(0) ATP synthase produces ATP from ADP in the presence of a proton or sodium gradient. F-type ATPases consist of two structural domains, F(1) containing the extramembraneous catalytic core and F(0) containing the membrane proton channel, linked together by a central stalk and a peripheral stalk. During catalysis, ATP synthesis in the catalytic domain of F(1) is coupled via a rotary mechanism of the central stalk subunits to proton translocation. Its function is as follows. This fusion protein includes a component of the F(0) channel (subunit b) and of the F(1) subunit (subunit delta). Two copies of subunit b and one of delta together form the peripheral 'stator' stalk which links F(1) to F(0). The polypeptide is ATP synthase subunit b-delta (atpFH) (Mycobacterium bovis (strain ATCC BAA-935 / AF2122/97)).